A 33-amino-acid chain; its full sequence is Photosystem II reaction center protein Psb30 (33 aa).

Residues 5-25 traverse the membrane as a helical segment; sequence VIAQPIVLGLIVASGPLVIVS.

It belongs to the Psb30/Ycf12 family. In terms of assembly, PSII is composed of 1 copy each of membrane proteins PsbA, PsbB, PsbC, PsbD, PsbE, PsbF, PsbH, PsbI, PsbJ, PsbK, PsbL, PsbM, PsbT, PsbX, PsbY, PsbZ, Psb30/Ycf12, peripheral proteins of the oxygen-evolving complex and a large number of cofactors. It forms dimeric complexes.

The protein resides in the plastid membrane. Functionally, a core subunit of photosystem II (PSII), probably helps stabilize the reaction center. The polypeptide is Photosystem II reaction center protein Psb30 (Aneura mirabilis (Parasitic liverwort)).